Consider the following 264-residue polypeptide: Eukaryotic translation initiation factor 6 (264 aa).

It belongs to the eIF-6 family. In terms of assembly, monomer. Associates with the 60S ribosomal subunit.

It is found in the cytoplasm. The protein localises to the nucleus. Its subcellular location is the nucleolus. In terms of biological role, binds to the 60S ribosomal subunit and prevents its association with the 40S ribosomal subunit to form the 80S initiation complex in the cytoplasm. May also be involved in ribosome biogenesis. This Toxoplasma gondii (strain ATCC 50861 / VEG) protein is Eukaryotic translation initiation factor 6.